The following is a 221-amino-acid chain: 7-cyano-7-deazaguanine synthase (221 aa).

8–18 serves as a coordination point for ATP; that stretch reads LSGGMDSAAVI. Zn(2+)-binding residues include cysteine 186, cysteine 196, cysteine 199, and cysteine 202.

It belongs to the QueC family. The cofactor is Zn(2+).

It catalyses the reaction 7-carboxy-7-deazaguanine + NH4(+) + ATP = 7-cyano-7-deazaguanine + ADP + phosphate + H2O + H(+). The protein operates within purine metabolism; 7-cyano-7-deazaguanine biosynthesis. Functionally, catalyzes the ATP-dependent conversion of 7-carboxy-7-deazaguanine (CDG) to 7-cyano-7-deazaguanine (preQ(0)). The sequence is that of 7-cyano-7-deazaguanine synthase from Stenotrophomonas maltophilia (strain R551-3).